Consider the following 217-residue polypeptide: Thiamine-phosphate synthase (217 aa).

4-amino-2-methyl-5-(diphosphooxymethyl)pyrimidine is bound by residues 37–41 (QFREK) and Asn72. The Mg(2+) site is built by Asp73 and Asp92. Residue Ser110 participates in 4-amino-2-methyl-5-(diphosphooxymethyl)pyrimidine binding. 136 to 138 (TVS) provides a ligand contact to 2-[(2R,5Z)-2-carboxy-4-methylthiazol-5(2H)-ylidene]ethyl phosphate. Residue Lys139 participates in 4-amino-2-methyl-5-(diphosphooxymethyl)pyrimidine binding. 2-[(2R,5Z)-2-carboxy-4-methylthiazol-5(2H)-ylidene]ethyl phosphate contacts are provided by residues Gly168 and 188-189 (IS).

Belongs to the thiamine-phosphate synthase family. The cofactor is Mg(2+).

The catalysed reaction is 2-[(2R,5Z)-2-carboxy-4-methylthiazol-5(2H)-ylidene]ethyl phosphate + 4-amino-2-methyl-5-(diphosphooxymethyl)pyrimidine + 2 H(+) = thiamine phosphate + CO2 + diphosphate. It carries out the reaction 2-(2-carboxy-4-methylthiazol-5-yl)ethyl phosphate + 4-amino-2-methyl-5-(diphosphooxymethyl)pyrimidine + 2 H(+) = thiamine phosphate + CO2 + diphosphate. It catalyses the reaction 4-methyl-5-(2-phosphooxyethyl)-thiazole + 4-amino-2-methyl-5-(diphosphooxymethyl)pyrimidine + H(+) = thiamine phosphate + diphosphate. It participates in cofactor biosynthesis; thiamine diphosphate biosynthesis; thiamine phosphate from 4-amino-2-methyl-5-diphosphomethylpyrimidine and 4-methyl-5-(2-phosphoethyl)-thiazole: step 1/1. Condenses 4-methyl-5-(beta-hydroxyethyl)thiazole monophosphate (THZ-P) and 2-methyl-4-amino-5-hydroxymethyl pyrimidine pyrophosphate (HMP-PP) to form thiamine monophosphate (TMP). This Anoxybacillus flavithermus (strain DSM 21510 / WK1) protein is Thiamine-phosphate synthase.